A 2851-amino-acid chain; its full sequence is Highly reducing polyketide synthase sthA (2851 aa).

Residues 8 to 415 (NEPIVIIGSG…GTNAHAIVEG (408 aa)) enclose the Ketosynthase family 3 (KS3) domain. The segment at 304 to 324 (LDPESPNDRPQYIESHGTGTP) is disordered. Residues 529 to 851 (IFTGQGAQYA…PYHGSLVRGE (323 aa)) are acyl transferase (AT) domain. The N-terminal hotdog fold stretch occupies residues 926 to 1059 (HQLLGNVSPD…GELNILLVDD (134 aa)). A PKS/mFAS DH domain is found at 926–1235 (HQLLGNVSPD…FKPVGSDAKD (310 aa)). The segment at 949–1242 (PKEMTWLEGH…AKDDRNVFYK (294 aa)) is dehydratase (DH) domain. Histidine 958 (proton acceptor; for dehydratase activity) is an active-site residue. Residues 1076–1235 (MIPVQPSRLY…FKPVGSDAKD (160 aa)) form a C-terminal hotdog fold region. The Proton donor; for dehydratase activity role is filled by aspartate 1137. Positions 1390–1577 (QCTLWVAGVL…GIDTMSPPEL (188 aa)) are methyltransferase (MT) domain. Residues 2079–2252 (TYWLVGLSGA…RSSVVNVGAI (174 aa)) form a ketoreductase (KR)domain region. The region spanning 2360–2443 (ADITKVVQQA…DLAAESIPAE (84 aa)) is the Carrier domain. The residue at position 2399 (serine 2399) is an O-(pantetheine 4'-phosphoryl)serine. Residues 2447–2496 (HVQQQQQQAGRQDASSNTSSDDETASTLPTSPESASPGTSTPVPEKDISP) form a disordered region. Residues 2455 to 2488 (AGRQDASSNTSSDDETASTLPTSPESASPGTSTP) are compositionally biased toward polar residues. Residues 2535 to 2767 (LTGCSGLLGH…DLVSVDTCCS (233 aa)) are reductase (R) domain.

Pantetheine 4'-phosphate is required as a cofactor.

The catalysed reaction is 7 malonyl-CoA + acetyl-CoA + 10 AH2 + 5 S-adenosyl-L-methionine + 2 H(+) = dehydroprobetaenone I + 10 A + 5 S-adenosyl-L-homocysteine + 7 CO2 + 8 CoA + 6 H2O. It functions in the pathway mycotoxin biosynthesis. Its function is as follows. Highly reducing polyketide synthase; part of the gene cluster that mediates the biosynthesis of the phytotoxin stemphyloxin II. The first step of the pathway is the synthesis of dehydroprobetaenone I by the polyketide synthase sthA and the enoyl reductase sthE via condensation of one acetyl-CoA starter unit with 7 malonyl-CoA units and 5 methylations. The C-terminal reductase (R) domain of sthA catalyzes the reductive release of the polyketide chain. Because sthA lacks a designated enoylreductase (ER) domain, the required activity is provided the enoyl reductase sthE. The short-chain dehydrogenase/reductase sthC then catalyzes reduction of dehydroprobetaenone I to probetaenone I. The cytochrome P450 monooxygenase sthF catalyzes successive epoxidation, oxidation (resulting from epoxide opening) and hydroxylation to install a tertiary alcohol in the decaline ring to yield betaenone C from dehydroprobetaenone I and betaenone B from probetaenone I. The FAD-linked oxidoreductase sthB is responsible for the conversion of betaenone C to betaenone A via an intramolecular aldol reaction between C-1 and C-17 to form the bridged tricyclic system in betaenone A. Finally, the cytochrome P450 monooxygenase sthD catalyzes the hydroxylation of C-15 to afford the final metabolite stemphyloxin II. The polypeptide is Highly reducing polyketide synthase sthA (Phaeosphaeria nodorum (strain SN15 / ATCC MYA-4574 / FGSC 10173) (Glume blotch fungus)).